The sequence spans 468 residues: Alpha-N-acetylgalactosaminidase (468 aa).

Positions 1–30 form a signal peptide, tat-type signal; it reads MENTRRNFLKKVTAAGIGAAGLAVTDQAMA. NAD(+) is bound by residues 62–63, Asp84, 133–136, 154–155, and Asn183; these read SR, WEWH, and EV. Tyr212 provides a ligand contact to substrate. 243–247 lines the NAD(+) pocket; that stretch reads AEAQW. Substrate is bound by residues Arg248, 260–263, and Tyr342; that span reads YPTH. Residue Tyr260 coordinates NAD(+).

Belongs to the Gfo/Idh/MocA family. Glycosyl hydrolase 109 subfamily. The cofactor is NAD(+). In terms of processing, predicted to be exported by the Tat system. The position of the signal peptide cleavage has not been experimentally proven.

It catalyses the reaction Cleavage of non-reducing alpha-(1-&gt;3)-N-acetylgalactosamine residues from human blood group A and AB mucin glycoproteins, Forssman hapten and blood group A lacto series glycolipids.. Functionally, glycosidase that has specific alpha-N-acetylgalactosaminidase activity. The chain is Alpha-N-acetylgalactosaminidase (nagA) from Tannerella forsythia (Bacteroides forsythus).